We begin with the raw amino-acid sequence, 411 residues long: Pyridinium-3,5-bisthiocarboxylic acid mononucleotide nickel insertion protein (411 aa).

It belongs to the LarC family.

The enzyme catalyses Ni(II)-pyridinium-3,5-bisthiocarboxylate mononucleotide = pyridinium-3,5-bisthiocarboxylate mononucleotide + Ni(2+). Involved in the biosynthesis of a nickel-pincer cofactor ((SCS)Ni(II) pincer complex). Binds Ni(2+), and functions in nickel delivery to pyridinium-3,5-bisthiocarboxylic acid mononucleotide (P2TMN), to form the mature cofactor. Is thus probably required for the activation of nickel-pincer cofactor-dependent enzymes. The polypeptide is Pyridinium-3,5-bisthiocarboxylic acid mononucleotide nickel insertion protein (Geobacillus kaustophilus (strain HTA426)).